An 831-amino-acid chain; its full sequence is Protein ADP-ribosyltransferase PARP3 (831 aa).

Residues 1–69 (MVHETRSRTL…KKLKAEESDL (69 aa)) are disordered. 2 stretches are compositionally biased toward basic and acidic residues: residues 15–32 (EEGK…KEQE) and 43–66 (KTAD…KAEE). Residues 49–199 (EHDGEQEPSK…NKYPKRNLDD (151 aa)) enclose the PADR1 zinc-binding domain. The interval 124–168 (GPLDKCPVCGGQLECKGLKYNCTGTHSEWACCSFSTNNPSRRGGP) is zinc ribbon. Cys129, Cys132, Cys145, and Cys155 together coordinate Zn(2+). In terms of domain architecture, BRCT spans 200–290 (EGIFSGMMIA…EKQPLAAYDI (91 aa)). The 102-residue stretch at 338 to 439 (GGHIYEKDGI…KKFKKKCMKM (102 aa)) folds into the WGR domain. Positions 466-585 (HCKLDPSVTF…DINVASRLIG (120 aa)) constitute a PARP alpha-helical domain. The region spanning 594–827 (DPLSQCYKKL…VKYEEQNMEV (234 aa)) is the PARP catalytic domain.

This sequence belongs to the ARTD/PARP family.

It is found in the nucleus. The catalysed reaction is L-aspartyl-[protein] + NAD(+) = 4-O-(ADP-D-ribosyl)-L-aspartyl-[protein] + nicotinamide. It catalyses the reaction L-glutamyl-[protein] + NAD(+) = 5-O-(ADP-D-ribosyl)-L-glutamyl-[protein] + nicotinamide. Functionally, involved in the base excision repair (BER) pathway, by catalyzing the poly(ADP-ribosyl)ation of a limited number of acceptor proteins involved in chromatin architecture and in DNA metabolism. This modification follows DNA damages and appears as an obligatory step in a detection/signaling pathway leading to the reparation of DNA strand breaks. The polypeptide is Protein ADP-ribosyltransferase PARP3 (PARP3) (Oryza sativa subsp. japonica (Rice)).